A 464-amino-acid polypeptide reads, in one-letter code: Glutamate--tRNA ligase (464 aa).

Positions 11–21 (PSPTGFIHLGN) match the 'HIGH' region motif. Positions 243 to 247 (KMSKR) match the 'KMSKS' region motif. K246 is a binding site for ATP.

It belongs to the class-I aminoacyl-tRNA synthetase family. Glutamate--tRNA ligase type 1 subfamily. Monomer.

The protein localises to the cytoplasm. It catalyses the reaction tRNA(Glu) + L-glutamate + ATP = L-glutamyl-tRNA(Glu) + AMP + diphosphate. Catalyzes the attachment of glutamate to tRNA(Glu) in a two-step reaction: glutamate is first activated by ATP to form Glu-AMP and then transferred to the acceptor end of tRNA(Glu). The chain is Glutamate--tRNA ligase from Polaromonas naphthalenivorans (strain CJ2).